A 597-amino-acid chain; its full sequence is Aspartate--tRNA(Asp/Asn) ligase (597 aa).

Glu172 provides a ligand contact to L-aspartate. The aspartate stretch occupies residues 196 to 199 (QLFK). Arg218 is an L-aspartate binding site. ATP-binding positions include 218-220 (RDE) and Gln227. Position 454 (His454) interacts with L-aspartate. Glu488 contributes to the ATP binding site. Arg495 lines the L-aspartate pocket. Residue 540-543 (GLDR) participates in ATP binding.

The protein belongs to the class-II aminoacyl-tRNA synthetase family. Type 1 subfamily. Homodimer.

The protein localises to the cytoplasm. It carries out the reaction tRNA(Asx) + L-aspartate + ATP = L-aspartyl-tRNA(Asx) + AMP + diphosphate. Functionally, aspartyl-tRNA synthetase with relaxed tRNA specificity since it is able to aspartylate not only its cognate tRNA(Asp) but also tRNA(Asn). Reaction proceeds in two steps: L-aspartate is first activated by ATP to form Asp-AMP and then transferred to the acceptor end of tRNA(Asp/Asn). This is Aspartate--tRNA(Asp/Asn) ligase from Chromobacterium violaceum (strain ATCC 12472 / DSM 30191 / JCM 1249 / CCUG 213 / NBRC 12614 / NCIMB 9131 / NCTC 9757 / MK).